The primary structure comprises 242 residues: MSRYQAALLGLGLLLMFLLYMGLPGPPKQTSQLGRGPNVTVLTGLTRGSSQIFYREVLPLQQTHRAEVVFLHGKAFNSHTWEQLGTLQLLSKRGYRAVAVDLPGFGNSAPSKEVSTESGRVELLEGVLRDLQLQNTVLVSPSLSGSYALPFLMQSHHQLCGFVPIAPTSTRNYAQEQFQAVKTPTLILYGELDHTLARESLQQLRHLPNHSVVKLHNAGHACYLHKPEAFHLALLAFLDHLP.

A helical; Signal-anchor for type II membrane protein transmembrane segment spans residues 6-26 (AALLGLGLLLMFLLYMGLPGP). Asn-38 carries an N-linked (GlcNAc...) asparagine glycan. Residues Ser-142, Asp-193, and His-220 each act as charge relay system in the active site.

This sequence belongs to the AB hydrolase superfamily. ABHD14 family.

The protein localises to the cytoplasm. Its subcellular location is the membrane. Its function is as follows. Possible role in granule neuron development. This Rattus norvegicus (Rat) protein is Protein ABHD14A.